Reading from the N-terminus, the 142-residue chain is Large ribosomal subunit protein uL13 (142 aa).

It belongs to the universal ribosomal protein uL13 family. As to quaternary structure, part of the 50S ribosomal subunit.

In terms of biological role, this protein is one of the early assembly proteins of the 50S ribosomal subunit, although it is not seen to bind rRNA by itself. It is important during the early stages of 50S assembly. The sequence is that of Large ribosomal subunit protein uL13 from Buchnera aphidicola subsp. Acyrthosiphon pisum (strain 5A).